The sequence spans 184 residues: UPF0149 protein PputW619_5026 (184 aa).

The protein belongs to the UPF0149 family.

This chain is UPF0149 protein PputW619_5026, found in Pseudomonas putida (strain W619).